We begin with the raw amino-acid sequence, 185 residues long: MAARWRRILIVFVAAQVLCLVNTFEEEDVPEEWILLHVVQGQIGAGNYSYLRLNHEGKIVLQMQSLKGDADLYVSDMTLHPSFDEYELQSVTCGQDIVHVPAHFRRPVGIGIYGHPSHQESEFEMKVYYDRTVVQYPFGEASYNPEEMEANQKYSHSTEDESQDEESVFWTVLIGILKLILEILF.

A signal peptide spans 1–23 (MAARWRRILIVFVAAQVLCLVNT). Asparagine 47 carries an N-linked (GlcNAc...) asparagine glycan.

It belongs to the UPF0669 family.

The protein resides in the secreted. The chain is UPF0669 protein C6orf120 homolog from Gallus gallus (Chicken).